The following is a 658-amino-acid chain: Glycogen debranching enzyme (658 aa).

The active-site Nucleophile is the Asp336. Glu371 functions as the Proton donor in the catalytic mechanism.

The protein belongs to the glycosyl hydrolase 13 family.

The enzyme catalyses Hydrolysis of (1-&gt;6)-alpha-D-glucosidic linkages to branches with degrees of polymerization of three or four glucose residues in limit dextrin.. It functions in the pathway glycan degradation; glycogen degradation. Removes maltotriose and maltotetraose chains that are attached by 1,6-alpha-linkage to the limit dextrin main chain, generating a debranched limit dextrin. The protein is Glycogen debranching enzyme of Klebsiella pneumoniae (strain 342).